Reading from the N-terminus, the 451-residue chain is 2-succinylbenzoate--CoA ligase (451 aa).

Belongs to the ATP-dependent AMP-binding enzyme family. MenE subfamily.

The catalysed reaction is 2-succinylbenzoate + ATP + CoA = 2-succinylbenzoyl-CoA + AMP + diphosphate. It functions in the pathway quinol/quinone metabolism; 1,4-dihydroxy-2-naphthoate biosynthesis; 1,4-dihydroxy-2-naphthoate from chorismate: step 5/7. The protein operates within quinol/quinone metabolism; menaquinone biosynthesis. In terms of biological role, converts 2-succinylbenzoate (OSB) to 2-succinylbenzoyl-CoA (OSB-CoA). The polypeptide is 2-succinylbenzoate--CoA ligase (Lactococcus lactis subsp. lactis (strain IL1403) (Streptococcus lactis)).